Consider the following 834-residue polypeptide: MRVAQSWLTEIIERTNAGWSVTPEELDAGFVRVGLEVEEVDRLERVGGDIERPLVVGRVAEITELTEFKKPIRFCKVDVGAPELQEIICGARNFAVGDLVVVVLPGGVLPGGFRITSRKTYGHVSNGMICSVAELGIGKDHSGILVLEPGTAEPGTDANELLGLDDTVIELNITPDRGYCFSVRGLARELACGFDLEYLDPAVRTLPEDAAEAWPITIEPASQCTRFAARRVTGIDPNAVSPWWLQRRLLLSGVRPISPAVDVTNYVMLELGQPLHAFDAAKLSGGLVVRTAKPGEKLRTLDDTERTLDAEDVVIADDSGAVSLAGIMGGASTEVGEGTTDVLLEAATWNPLLVYRTARRHKLVSEAGKRYERVVDPEINVAALDRAATLLAEIAGGTVEPVLSDVRVPTPAPEPIRMDIDLPDRVAGVAYPTGTAARRLAQIGCHVEVSVDEESGHGQLVVTPPSWRPDLAQPADLVEEVLRLEGLEQIPSVVPTAPAGRGLTPEQRRRRAVSRALAFAGGVEVPPPVFLPAGVFDTWGLDADDPRRTTTRVLNPLDVERAELATTLLPGLLEVAQRNISRGARDLTLYGIAQVVLPTGDTKPVAPLPVDRRPTDEQIAELLGSLPDQPVHVAAVLTGRREPRGPWGPGRQAEAADAFALVDAVADAAGVVIERRPAAYLPWHPGRCAELVVEGRVVGYAGELHPAVLERSGLPARTCALELDLDALPLRESRPVPVVSPFPAVLQDVSVSVSKSVAAAAVESALRSGGGELLEDIALFDVYEGAQAGEGRKSLTYALRFRAPDRTLTEDEASAARDAAVAAAADAVGAVLRG.

One can recognise a tRNA-binding domain in the interval 48-159 (GDIERPLVVG…GTAEPGTDAN (112 aa)). A B5 domain is found at 411–492 (PAPEPIRMDI…RLEGLEQIPS (82 aa)). Mg(2+) contacts are provided by Asp470, Asp476, Glu479, and Glu480. The FDX-ACB domain maps to 740 to 833 (SPFPAVLQDV…AADAVGAVLR (94 aa)).

It belongs to the phenylalanyl-tRNA synthetase beta subunit family. Type 1 subfamily. In terms of assembly, tetramer of two alpha and two beta subunits. The cofactor is Mg(2+).

The protein resides in the cytoplasm. The enzyme catalyses tRNA(Phe) + L-phenylalanine + ATP = L-phenylalanyl-tRNA(Phe) + AMP + diphosphate + H(+). This chain is Phenylalanine--tRNA ligase beta subunit, found in Nocardia farcinica (strain IFM 10152).